Here is a 96-residue protein sequence, read N- to C-terminus: U-scoloptoxin(06)-Sm1a (96 aa).

An N-terminal signal peptide occupies residues 1–23 (MNSFSFFLVIFVVLNLQVAKLMA).

Belongs to the scoloptoxin-06 family. Post-translationally, contains 2 disulfide bonds. As to expression, expressed by the venom gland.

The protein resides in the secreted. The protein is U-scoloptoxin(06)-Sm1a of Scolopendra morsitans (Tanzanian blue ringleg centipede).